A 149-amino-acid chain; its full sequence is Pleckstrin homology domain-containing family J member 1 (149 aa).

Residues 15-108 (RAEKAAELSM…WVEALTNASY (94 aa)) enclose the PH domain.

This chain is Pleckstrin homology domain-containing family J member 1 (plekhj1), found in Xenopus tropicalis (Western clawed frog).